Consider the following 432-residue polypeptide: Chaperone SurA (432 aa).

A signal peptide spans 1–26 (MKKIASFCSAAVLIASSFLLNNTVQA). PpiC domains are found at residues 176–277 (QTEY…KVQD) and 286–386 (VQEV…EVTG).

It is found in the periplasm. It catalyses the reaction [protein]-peptidylproline (omega=180) = [protein]-peptidylproline (omega=0). Functionally, chaperone involved in the correct folding and assembly of outer membrane proteins. Recognizes specific patterns of aromatic residues and the orientation of their side chains, which are found more frequently in integral outer membrane proteins. May act in both early periplasmic and late outer membrane-associated steps of protein maturation. In Idiomarina loihiensis (strain ATCC BAA-735 / DSM 15497 / L2-TR), this protein is Chaperone SurA.